Reading from the N-terminus, the 147-residue chain is Large ribosomal subunit protein uL13 (147 aa).

Belongs to the universal ribosomal protein uL13 family. As to quaternary structure, part of the 50S ribosomal subunit.

Functionally, this protein is one of the early assembly proteins of the 50S ribosomal subunit, although it is not seen to bind rRNA by itself. It is important during the early stages of 50S assembly. This Ligilactobacillus salivarius (strain UCC118) (Lactobacillus salivarius) protein is Large ribosomal subunit protein uL13.